A 540-amino-acid polypeptide reads, in one-letter code: DM7 family protein GD24576 (540 aa).

The interval 416–443 (ATDTRGRDEIRTSCDQSQEKDEGSAEAD) is disordered. A compositionally biased stretch (basic and acidic residues) spans 417–443 (TDTRGRDEIRTSCDQSQEKDEGSAEAD).

This sequence belongs to the DM7 family.

The chain is DM7 family protein GD24576 from Drosophila simulans (Fruit fly).